Reading from the N-terminus, the 487-residue chain is Serine carboxypeptidase-like 38 (487 aa).

The N-terminal stretch at M1–A20 is a signal peptide. Cystine bridges form between C119-C368, C280-C290, and C315-C336. The active site involves S215. N-linked (GlcNAc...) asparagine glycosylation is present at N233. N-linked (GlcNAc...) asparagine glycosylation is found at N317 and N357. D407 is a catalytic residue. Residues N423 and N449 are each glycosylated (N-linked (GlcNAc...) asparagine). H460 is a catalytic residue.

The protein belongs to the peptidase S10 family. Expressed in seedlings, roots, leaves, flowers and siliques.

The protein resides in the secreted. In terms of biological role, probable carboxypeptidase. The protein is Serine carboxypeptidase-like 38 (SCPL38) of Arabidopsis thaliana (Mouse-ear cress).